The chain runs to 866 residues: Dimethylglycine dehydrogenase, mitochondrial (866 aa).

The transit peptide at 1 to 50 (MLRPGAQLLRGLLLRSCPLQGSPGRPRSVCGREGEEKPPLSAETQWKDRA) directs the protein to the mitochondrion. The disordered stretch occupies residues 20–42 (QGSPGRPRSVCGREGEEKPPLSA). Residues 59-60 (CV), 80-81 (EK), and 87-95 (GSTWHAAGL) each bind FAD. A Tele-8alpha-FAD histidine modification is found at His91. Lys114 carries the N6-acetyllysine modification. Lys148 bears the N6-acetyllysine; alternate mark. The residue at position 148 (Lys148) is an N6-succinyllysine; alternate. Lys168 carries the post-translational modification N6-acetyllysine. Val219 is an FAD binding site. Lys223 carries the post-translational modification N6-acetyllysine. Trp251 contacts FAD. N6-succinyllysine occurs at positions 317 and 319. Residues Lys335 and Lys360 each carry the N6-acetyllysine modification. An FAD-binding site is contributed by 397–402 (FGYGII). 2 positions are modified to N6-acetyllysine; alternate: Lys434 and Lys523. Lys434 and Lys523 each carry N6-succinyllysine; alternate. 580–582 (ELT) lines the (6S)-5,6,7,8-tetrahydrofolate pocket. At Lys655 the chain carries N6-acetyllysine; alternate. Lys655 carries the post-translational modification N6-succinyllysine; alternate. Residues Tyr676, 683–685 (ELY), and Tyr744 contribute to the (6S)-5,6,7,8-tetrahydrofolate site. N6-acetyllysine is present on Lys764. Residue Lys795 is modified to N6-succinyllysine.

This sequence belongs to the GcvT family. In terms of assembly, monomer. It depends on FAD as a cofactor.

The protein resides in the mitochondrion. The enzyme catalyses (6S)-5,6,7,8-tetrahydrofolyl-(gamma-L-Glu)(n) + N,N-dimethylglycine + oxidized [electron-transfer flavoprotein] + H(+) = (6R)-5,10-methylenetetrahydrofolyl-(gamma-L-Glu)(n) + sarcosine + reduced [electron-transfer flavoprotein]. It participates in amine and polyamine degradation; betaine degradation; sarcosine from betaine: step 2/2. Functionally, catalyzes the demethylation of N,N-dimethylglycine to sarcosine. Also has activity with sarcosine in vitro. This chain is Dimethylglycine dehydrogenase, mitochondrial (DMGDH), found in Homo sapiens (Human).